A 273-amino-acid chain; its full sequence is Nicotinamide N-methyltransferase (273 aa).

S-adenosyl-L-methionine contacts are provided by residues tyrosine 35, tyrosine 40, 74-75 (GA), tyrosine 80, aspartate 96, asparagine 101, and 152-153 (NV).

It belongs to the class I-like SAM-binding methyltransferase superfamily. NNMT/PNMT/TEMT family.

The enzyme catalyses nicotinamide + S-adenosyl-L-methionine = 1-methylnicotinamide + S-adenosyl-L-homocysteine. Catalyzes the N-methylation of nicotinamide and other pyridines to form pyridinium ions. Involved in regulation of lifespan extension downstream of the sirtuin sir-2.1, probably through its role in nicotinic acid metabolism. This chain is Nicotinamide N-methyltransferase, found in Caenorhabditis elegans.